A 596-amino-acid chain; its full sequence is Bromodomain-containing protein 9 (596 aa).

A compositionally biased stretch (basic residues) spans 1–10 (MGKKHKKHKA). 2 disordered regions span residues 1–26 (MGKK…PLEK) and 38–137 (EVTE…AENE). A compositionally biased stretch (basic and acidic residues) spans 50–62 (SYYDDRSDHERER). The residue at position 56 (S56) is a Phosphoserine. Over residues 63–73 (HREKKKKKKKK) the composition is skewed to basic residues. Basic and acidic residues predominate over residues 74–85 (SEKEKHLDEEER). Basic residues predominate over residues 86-97 (RKRKEEKKRKRE). Basic and acidic residues predominate over residues 111 to 126 (DPGKKVEVEPPPDRPV). In terms of domain architecture, Bromo spans 136-240 (NESTPIQRLL…HAGFKMMSKA (105 aa)). Positions 214–216 (TYN) are histone H4K5ac H4K8ac and histone H4K5bu H4K8bu binding. K372 carries the post-translational modification N6-acetyllysine; alternate. K372 participates in a covalent cross-link: Glycyl lysine isopeptide (Lys-Gly) (interchain with G-Cter in SUMO2); alternate. The tract at residues 536-596 (AQAERGGSRP…SPEPAAPAKN (61 aa)) is disordered. Low complexity predominate over residues 543-555 (SRPSSNLSSLSTA). Phosphoserine is present on residues S565 and S587.

Binds acetylated histones H3 and H4. Binds butyrylated histone H4. Component of the multiprotein chromatin-remodeling subcomplex SWI/SNF called GBAF, which includes at least BICRA or BICRAL (mutually exclusive), BRD9, SS18, the core BAF subunits, SMARCA2/BRM, SMARCA4/BRG1/BAF190A, ACTL6A/BAF53, SMARCC1/BAF155, and SMARCD1/BAF60A. Interacts (via N-terminal bromodomain) with acetylated RAD54. Interacts (via C-terminus) with RAD51.

It localises to the nucleus. In terms of biological role, plays a role in chromatin remodeling and regulation of transcription. Acts as a chromatin reader that recognizes and binds acylated histones: binds histones that are acetylated and/or butyrylated. Component of SWI/SNF chromatin remodeling subcomplex GBAF that carries out key enzymatic activities, changing chromatin structure by altering DNA-histone contacts within a nucleosome in an ATP-dependent manner. Also orchestrates the RAD51-RAD54 complex formation and thereby plays a role in homologous recombination (HR). In Mus musculus (Mouse), this protein is Bromodomain-containing protein 9 (Brd9).